Reading from the N-terminus, the 217-residue chain is Probable transaldolase (217 aa).

Residue Lys83 is the Schiff-base intermediate with substrate of the active site.

The protein belongs to the transaldolase family. Type 3B subfamily.

It localises to the cytoplasm. It catalyses the reaction D-sedoheptulose 7-phosphate + D-glyceraldehyde 3-phosphate = D-erythrose 4-phosphate + beta-D-fructose 6-phosphate. Its pathway is carbohydrate degradation; pentose phosphate pathway; D-glyceraldehyde 3-phosphate and beta-D-fructose 6-phosphate from D-ribose 5-phosphate and D-xylulose 5-phosphate (non-oxidative stage): step 2/3. Transaldolase is important for the balance of metabolites in the pentose-phosphate pathway. The sequence is that of Probable transaldolase from Chelativorans sp. (strain BNC1).